Reading from the N-terminus, the 387-residue chain is 3-ketoacyl-CoA thiolase (387 aa).

Residue cysteine 91 is the Acyl-thioester intermediate of the active site. Active-site proton acceptor residues include histidine 343 and cysteine 373.

It belongs to the thiolase-like superfamily. Thiolase family. Heterotetramer of two alpha chains (FadB) and two beta chains (FadA).

The protein localises to the cytoplasm. The enzyme catalyses an acyl-CoA + acetyl-CoA = a 3-oxoacyl-CoA + CoA. Its pathway is lipid metabolism; fatty acid beta-oxidation. In terms of biological role, catalyzes the final step of fatty acid oxidation in which acetyl-CoA is released and the CoA ester of a fatty acid two carbons shorter is formed. This Shewanella sp. (strain W3-18-1) protein is 3-ketoacyl-CoA thiolase.